The primary structure comprises 340 residues: 4-amino-5-hydroxymethyl-2-methylpyrimidine phosphate synthase THI11 (340 aa).

The residue at position 62 (lysine 62) is an N6-(pyridoxal phosphate)lysine. The active site involves histidine 66. 115 to 118 (GEFG) is a binding site for pyridoxal 5'-phosphate. The CCCFC; essential for catalytic activity, may be the site of iron coordination signature appears at 195–199 (CCCFC).

Belongs to the NMT1/THI5 family. As to quaternary structure, homodimer. It depends on Fe cation as a cofactor.

The enzyme catalyses N(6)-(pyridoxal phosphate)-L-lysyl-[4-amino-5-hydroxymethyl-2-methylpyrimidine phosphate synthase] + L-histidyl-[4-amino-5-hydroxymethyl-2-methylpyrimidine phosphate synthase] + 2 Fe(3+) + 4 H2O = L-lysyl-[4-amino-5-hydroxymethyl-2-methylpyrimidine phosphate synthase] + (2S)-2-amino-5-hydroxy-4-oxopentanoyl-[4-amino-5-hydroxymethyl-2-methylpyrimidine phosphate synthase] + 4-amino-2-methyl-5-(phosphooxymethyl)pyrimidine + 3-oxopropanoate + 2 Fe(2+) + 2 H(+). The protein operates within cofactor biosynthesis; thiamine diphosphate biosynthesis. In terms of biological role, responsible for the formation of the pyrimidine heterocycle in the thiamine biosynthesis pathway. Catalyzes the formation of hydroxymethylpyrimidine phosphate (HMP-P) from histidine and pyridoxal phosphate (PLP). The protein uses PLP and the active site histidine to form HMP-P, generating an inactive enzyme. The enzyme can only undergo a single turnover, which suggests it is a suicide enzyme. This Saccharomyces cerevisiae (strain ATCC 204508 / S288c) (Baker's yeast) protein is 4-amino-5-hydroxymethyl-2-methylpyrimidine phosphate synthase THI11.